Consider the following 399-residue polypeptide: Galactokinase (399 aa).

Residue E42–D45 coordinates substrate. ATP contacts are provided by residues S76 and A133–S139. Positions 139 and 171 each coordinate Mg(2+). D183 (proton acceptor) is an active-site residue. Y233 is a binding site for substrate.

Belongs to the GHMP kinase family. GalK subfamily. As to quaternary structure, monomer.

It is found in the cytoplasm. The catalysed reaction is alpha-D-galactose + ATP = alpha-D-galactose 1-phosphate + ADP + H(+). It participates in carbohydrate metabolism; galactose metabolism. Its function is as follows. Catalyzes the transfer of the gamma-phosphate of ATP to D-galactose to form alpha-D-galactose-1-phosphate (Gal-1-P). The sequence is that of Galactokinase from Lactococcus lactis subsp. lactis (strain IL1403) (Streptococcus lactis).